A 200-amino-acid chain; its full sequence is Coiled-coil domain-containing protein 85B (200 aa).

Positions 57 to 84 (LQGHLLEIRELKVINQRLQEENQELRDL) form a coiled coil. Positions 178–188 (DGSSSTGSVGS) are enriched in low complexity. Residues 178–200 (DGSSSTGSVGSPDQLHLVCSPDD) are disordered.

This sequence belongs to the CCDC85 family.

The protein resides in the nucleus. It localises to the cytoplasm. It is found in the cytoskeleton. Its subcellular location is the microtubule organizing center. The protein localises to the centrosome. The protein resides in the cell junction. It localises to the adherens junction. Functionally, functions as a transcriptional repressor. May inhibit the activity of CTNNB1 in a TP53-dependent manner and thus regulate cell growth. May function in adipocyte differentiation, negatively regulating mitotic clonal expansion. Plays a role in cell-cell adhesion and epithelium development through its interaction with proteins of the beta-catenin family. In Danio rerio (Zebrafish), this protein is Coiled-coil domain-containing protein 85B (ccdc85b).